The chain runs to 729 residues: 1,4-alpha-glucan branching enzyme GlgB (729 aa).

The Nucleophile role is filled by Asp405. The Proton donor role is filled by Glu458.

This sequence belongs to the glycosyl hydrolase 13 family. GlgB subfamily. As to quaternary structure, monomer.

It carries out the reaction Transfers a segment of a (1-&gt;4)-alpha-D-glucan chain to a primary hydroxy group in a similar glucan chain.. Its pathway is glycan biosynthesis; glycogen biosynthesis. Its function is as follows. Catalyzes the formation of the alpha-1,6-glucosidic linkages in glycogen by scission of a 1,4-alpha-linked oligosaccharide from growing alpha-1,4-glucan chains and the subsequent attachment of the oligosaccharide to the alpha-1,6 position. The polypeptide is 1,4-alpha-glucan branching enzyme GlgB (Mannheimia succiniciproducens (strain KCTC 0769BP / MBEL55E)).